A 471-amino-acid polypeptide reads, in one-letter code: Cysteine--tRNA ligase (471 aa).

Cys-29 is a binding site for Zn(2+). A 'HIGH' region motif is present at residues 31 to 41 (LTVQSEPHVGH). 3 residues coordinate Zn(2+): Cys-215, His-240, and Glu-244. The short motif at 271–275 (KMSKS) is the 'KMSKS' region element. Lys-274 serves as a coordination point for ATP.

It belongs to the class-I aminoacyl-tRNA synthetase family. Monomer. Zn(2+) serves as cofactor.

The protein resides in the cytoplasm. It carries out the reaction tRNA(Cys) + L-cysteine + ATP = L-cysteinyl-tRNA(Cys) + AMP + diphosphate. This chain is Cysteine--tRNA ligase, found in Nocardioides sp. (strain ATCC BAA-499 / JS614).